Here is a 571-residue protein sequence, read N- to C-terminus: Proline--tRNA ligase (571 aa).

It belongs to the class-II aminoacyl-tRNA synthetase family. ProS type 1 subfamily. Homodimer.

The protein localises to the cytoplasm. The enzyme catalyses tRNA(Pro) + L-proline + ATP = L-prolyl-tRNA(Pro) + AMP + diphosphate. In terms of biological role, catalyzes the attachment of proline to tRNA(Pro) in a two-step reaction: proline is first activated by ATP to form Pro-AMP and then transferred to the acceptor end of tRNA(Pro). As ProRS can inadvertently accommodate and process non-cognate amino acids such as alanine and cysteine, to avoid such errors it has two additional distinct editing activities against alanine. One activity is designated as 'pretransfer' editing and involves the tRNA(Pro)-independent hydrolysis of activated Ala-AMP. The other activity is designated 'posttransfer' editing and involves deacylation of mischarged Ala-tRNA(Pro). The misacylated Cys-tRNA(Pro) is not edited by ProRS. In Stutzerimonas stutzeri (strain A1501) (Pseudomonas stutzeri), this protein is Proline--tRNA ligase.